Reading from the N-terminus, the 335-residue chain is Heme A synthase (335 aa).

Transmembrane regions (helical) follow at residues 9–29 (VAIW…IGGF), 90–110 (YVHR…FIYF), 120–140 (VVIR…TGWY), 156–176 (MLTL…YQFF), 197–217 (VGII…VAGL), 255–275 (VQFI…VLTI), 283–303 (VYVM…TLLL), and 309–329 (IAIS…CFLC). A heme-binding site is contributed by H259. H313 provides a ligand contact to heme.

The protein belongs to the COX15/CtaA family. Type 2 subfamily. As to quaternary structure, interacts with CtaB. Requires heme b as cofactor.

The protein resides in the cell membrane. The catalysed reaction is Fe(II)-heme o + 2 A + H2O = Fe(II)-heme a + 2 AH2. It functions in the pathway porphyrin-containing compound metabolism; heme A biosynthesis; heme A from heme O: step 1/1. Its function is as follows. Catalyzes the conversion of heme O to heme A by two successive hydroxylations of the methyl group at C8. The first hydroxylation forms heme I, the second hydroxylation results in an unstable dihydroxymethyl group, which spontaneously dehydrates, resulting in the formyl group of heme A. This is Heme A synthase from Wolbachia sp. subsp. Brugia malayi (strain TRS).